A 57-amino-acid polypeptide reads, in one-letter code: uncharacterized protein (57 aa).

This is an uncharacterized protein from Ureaplasma parvum serovar 3 (strain ATCC 700970).